A 380-amino-acid chain; its full sequence is Cytochrome b (380 aa).

4 helical membrane passes run 34–54 (FGSL…LLAA), 78–99 (WLIR…YLHI), 114–134 (WNTG…GYVL), and 179–199 (FFTL…IHLT). Heme b-binding residues include His-84 and His-98. Positions 183 and 197 each coordinate heme b. Residue His-202 coordinates a ubiquinone. 4 helical membrane passes run 227-247 (TKDI…ALFS), 289-309 (LGGV…PLLH), 321-341 (LSQL…WIGS), and 348-368 (FIII…ILFP).

This sequence belongs to the cytochrome b family. The cytochrome bc1 complex contains 11 subunits: 3 respiratory subunits (MT-CYB, CYC1 and UQCRFS1), 2 core proteins (UQCRC1 and UQCRC2) and 6 low-molecular weight proteins (UQCRH/QCR6, UQCRB/QCR7, UQCRQ/QCR8, UQCR10/QCR9, UQCR11/QCR10 and a cleavage product of UQCRFS1). This cytochrome bc1 complex then forms a dimer. Heme b serves as cofactor.

It localises to the mitochondrion inner membrane. In terms of biological role, component of the ubiquinol-cytochrome c reductase complex (complex III or cytochrome b-c1 complex) that is part of the mitochondrial respiratory chain. The b-c1 complex mediates electron transfer from ubiquinol to cytochrome c. Contributes to the generation of a proton gradient across the mitochondrial membrane that is then used for ATP synthesis. The protein is Cytochrome b (MT-CYB) of Eudyptes chrysocome (Western rockhopper penguin).